Reading from the N-terminus, the 185-residue chain is MINEIKKDAQTRMQKSLESLTHAFTRIRTGKAHPSILGGVMVPYYGADTPLSQVANVTVKDSRTLQVVAFERNMLAAVDKAIQSSGLGFNPTNLGELLLISMPALTEETRKGFTKQARDAAEDARVAVRNIRRDALSQLKDLVKEKEISEDEERRAADDVQKLTDKFVAEIEVAVKQKEADLMAV.

The protein belongs to the RRF family.

The protein localises to the cytoplasm. Responsible for the release of ribosomes from messenger RNA at the termination of protein biosynthesis. May increase the efficiency of translation by recycling ribosomes from one round of translation to another. The chain is Ribosome-recycling factor from Pseudomonas savastanoi pv. phaseolicola (strain 1448A / Race 6) (Pseudomonas syringae pv. phaseolicola (strain 1448A / Race 6)).